The following is a 112-amino-acid chain: Cytochrome c type-1 (112 aa).

Cys-20, Cys-23, His-24, and Met-85 together coordinate heme c.

In terms of processing, binds 1 heme c group covalently per subunit.

The protein resides in the mitochondrion intermembrane space. Its function is as follows. Electron carrier between complex III (ubiquinol-cytochrome c oxireductase) and complex IV (cytochrome c oxidase). The sequence is that of Cytochrome c type-1 from Ascaris suum (Pig roundworm).